The sequence spans 140 residues: Protein YwqH (140 aa).

Residues Met6–Lys51 adopt a coiled-coil conformation.

This chain is Protein YwqH (ywqH), found in Bacillus subtilis (strain 168).